The sequence spans 243 residues: Cyclin-dependent kinase 20 (243 aa).

Residues 4–243 (YCILGRIGEG…IHLSCRFLSV (240 aa)) form the Protein kinase domain. Residues 10–18 (IGEGAHGIV) and lysine 33 each bind ATP. The active-site Proton acceptor is aspartate 127.

The protein belongs to the protein kinase superfamily. CMGC Ser/Thr protein kinase family. CDC2/CDKX subfamily. In terms of assembly, monomer. Interacts with TBC1D32 and MAK.

The protein localises to the nucleus. Its subcellular location is the cytoplasm. It is found in the cell projection. The protein resides in the cilium. The catalysed reaction is L-seryl-[protein] + ATP = O-phospho-L-seryl-[protein] + ADP + H(+). It catalyses the reaction L-threonyl-[protein] + ATP = O-phospho-L-threonyl-[protein] + ADP + H(+). In terms of biological role, required for high-level Shh responses in the developing neural tube. Together with TBC1D32, controls the structure of the primary cilium by coordinating assembly of the ciliary membrane and axoneme, allowing GLI2 to be properly activated in response to SHH signaling. Involved in cell growth. Activates CDK2, a kinase involved in the control of the cell cycle, by phosphorylating residue 'Thr-160'. The sequence is that of Cyclin-dependent kinase 20 (CDK20) from Macaca mulatta (Rhesus macaque).